Here is a 329-residue protein sequence, read N- to C-terminus: DNA-directed RNA polymerase subunit alpha (329 aa).

Residues 1–235 form an alpha N-terminal domain (alpha-NTD) region; that stretch reads MQGSVTEFLK…EQLEAFVDLR (235 aa). The interval 249 to 329 is alpha C-terminal domain (alpha-CTD); the sequence is FDPILLRPVD…NWPPASIADE (81 aa).

This sequence belongs to the RNA polymerase alpha chain family. As to quaternary structure, homodimer. The RNAP catalytic core consists of 2 alpha, 1 beta, 1 beta' and 1 omega subunit. When a sigma factor is associated with the core the holoenzyme is formed, which can initiate transcription.

It catalyses the reaction RNA(n) + a ribonucleoside 5'-triphosphate = RNA(n+1) + diphosphate. DNA-dependent RNA polymerase catalyzes the transcription of DNA into RNA using the four ribonucleoside triphosphates as substrates. This is DNA-directed RNA polymerase subunit alpha from Sodalis glossinidius (strain morsitans).